The chain runs to 82 residues: MEEKNYDDGDTVTVDDDYQMGCTTPTRDDCRIPAYPPCPPPVRRKRSLLGFGKKREPPKKGYFQPPDLDLFFSVVAASQAAT.

Residues 1 to 26 (MEEKNYDDGDTVTVDDDYQMGCTTPT) form a disordered region. Acidic residues predominate over residues 8–18 (DGDTVTVDDDY).

In terms of assembly, interacts with CDKA-1 and D-type cyclins. In terms of tissue distribution, expressed in columella cells in the roots and in root meristems after induction.

Probable cyclin-dependent protein kinase (CDK) inhibitor that functions as a repressor of mitosis in the endoreduplication cell cycle. Acts as a potent cell cycle inhibitor, regulating a hydroxyurea-dependent checkpoint in leaves. Essential to activate a high-light-dependent cell cycle checkpoint. The polypeptide is Cyclin-dependent protein kinase inhibitor SMR5 (Arabidopsis thaliana (Mouse-ear cress)).